The following is a 114-amino-acid chain: MGSRPCALGLFCCCSSCFCLCCPRHRPVSRLAAVVGGAAAVPAVVSGVTGLILSPSQSPIFIQPTPSPPMSPLRPGLDLVFANPPDHSAPLGVTRPSAPPLPHVVDLPQLGPRR.

Hydrophobic stretches follow at residues 6-22 (CALG…CLCC) and 33-53 (AVVG…GLIL). The interaction with host HPX stretch occupies residues 28 to 68 (VSRLAAVVGGAAAVPAVVSGVTGLILSPSQSPIFIQPTPSP). The interval 48-72 (VTGLILSPSQSPIFIQPTPSPPMSP) is interaction with the capsid protein. Ser71 bears the Phosphoserine; by host mark. The homodimerization, and interaction with host AMBP/bikunin stretch occupies residues 72–114 (PLRPGLDLVFANPPDHSAPLGVTRPSAPPLPHVVDLPQLGPRR). A disordered region spans residues 91–114 (LGVTRPSAPPLPHVVDLPQLGPRR). Positions 95–104 (RPSAPPLPHV) are interaction with host SRC, HCK, FYN, PIK3R3 and GRB2. Positions 96–99 (PSAP) match the PTAP/PSAP motif motif.

Belongs to the hepevirus ORF3 protein family. Forms homooligomers. Interacts with host SRC, HCK, FYN, PIK3R3 and GRB2 (via SH3 domain); binding does not activate the kinases. Interacts with host AMBP/bikunin and AMBP/alpha-1-microglobulin peptides. Interacts with host HPX/hemopexin. Interacts (when phosphorylated) with capsid protein ORF2. Interacts with host TSG101; this interaction plays a role in viral release from the host cell. Interacts with host SIRPA; this interaction down-regulates the phosphorylation of host IRF3. Palmitoylated in the N-terminus.

The protein localises to the host endoplasmic reticulum membrane. It is found in the host cytoplasm. It localises to the host cytoskeleton. Its subcellular location is the virion. The protein resides in the host cell membrane. Small multifunctional phosphoprotein involved in virion morphogenesis, egress and counteracting host innate immunity. Plays critical roles in the final steps of viral release by interacting with host TSG101, a member of the vacuolar protein-sorting pathway and using other cellular host proteins involved in vesicle formation pathway. Also acts as a viroporin and forms ion conductive pores allowing viral particle release. Impairs the generation of type I interferon by down-regulating host TLR3 and TLR7 as well as their downstream signaling pathways. Down-regulates the phosphorylation of host IRF3 via the interaction with host SIRP-alpha, thereby inhibiting IFN-I expression. Interacts with host microtubules. The polypeptide is Protein ORF3 (Hepatitis E virus genotype 1 (isolate Human/Burma) (HEV-1)).